The chain runs to 606 residues: NADH-ubiquinone oxidoreductase chain 5 (606 aa).

16 helical membrane passes run 3–23, 35–55, 87–107, 117–137, 140–160, 171–191, 211–233, 241–261, 273–293, 301–320, 325–347, 366–386, 402–422, 457–477, 488–508, and 582–602; these read LFTS…LMSL, YVKT…LIFI, MIFT…SMWY, FFKY…ANNL, LFIG…WWYG, AILY…WFLF, LPLL…HPWL, TPVS…FLLI, MQTL…ICAL, IIAF…IGIN, AFLH…GSII, LPFT…TPFL, SYTN…TAVY, LLIG…PMTI, LTAL…SLMT, and GLIK…MLLF.

It belongs to the complex I subunit 5 family. As to quaternary structure, core subunit of respiratory chain NADH dehydrogenase (Complex I) which is composed of 45 different subunits.

It localises to the mitochondrion inner membrane. The enzyme catalyses a ubiquinone + NADH + 5 H(+)(in) = a ubiquinol + NAD(+) + 4 H(+)(out). Core subunit of the mitochondrial membrane respiratory chain NADH dehydrogenase (Complex I) which catalyzes electron transfer from NADH through the respiratory chain, using ubiquinone as an electron acceptor. Essential for the catalytic activity and assembly of complex I. The sequence is that of NADH-ubiquinone oxidoreductase chain 5 (MT-ND5) from Pseudosoriculus fumidus (Taiwanese brown-toothed shrew).